A 126-amino-acid chain; its full sequence is Small ribosomal subunit protein uS8 (126 aa).

This sequence belongs to the universal ribosomal protein uS8 family. Part of the 30S ribosomal subunit. Contacts proteins S5 and S12.

In terms of biological role, one of the primary rRNA binding proteins, it binds directly to 16S rRNA central domain where it helps coordinate assembly of the platform of the 30S subunit. In Nitratidesulfovibrio vulgaris (strain DSM 19637 / Miyazaki F) (Desulfovibrio vulgaris), this protein is Small ribosomal subunit protein uS8.